A 513-amino-acid chain; its full sequence is Serine/threonine-protein kinase ppk8 (513 aa).

Over residues 98 to 114 (LSSTLTSMSEESSSTES) the composition is skewed to low complexity. Residues 98-120 (LSSTLTSMSEESSSTESKFATLN) are disordered. The 265-residue stretch at 241–505 (GKLNNVIGEG…ISGARSTTWM (265 aa)) folds into the Protein kinase domain. ATP contacts are provided by residues 247–255 (IGEGASSFI) and lysine 270. Catalysis depends on aspartate 364, which acts as the Proton acceptor.

It belongs to the protein kinase superfamily. Ser/Thr protein kinase family.

The protein resides in the cytoplasm. The protein localises to the nucleus. The enzyme catalyses L-seryl-[protein] + ATP = O-phospho-L-seryl-[protein] + ADP + H(+). The catalysed reaction is L-threonyl-[protein] + ATP = O-phospho-L-threonyl-[protein] + ADP + H(+). The polypeptide is Serine/threonine-protein kinase ppk8 (ppk8) (Schizosaccharomyces pombe (strain 972 / ATCC 24843) (Fission yeast)).